Consider the following 119-residue polypeptide: Large ribosomal subunit protein bL17 (119 aa).

Belongs to the bacterial ribosomal protein bL17 family. Part of the 50S ribosomal subunit. Contacts protein L32.

In Malacoplasma penetrans (strain HF-2) (Mycoplasma penetrans), this protein is Large ribosomal subunit protein bL17.